A 239-amino-acid chain; its full sequence is Mitochondrial fission factor homolog B (239 aa).

The Cytoplasmic segment spans residues 1 to 219; that stretch reads MAEINRMQYE…ENKERVKHEM (219 aa). Residues 107–139 form a disordered region; sequence EGPAPATPHSKEVRSSGHLKRDGLASENSLRQN. Basic and acidic residues predominate over residues 115-130; sequence HSKEVRSSGHLKRDGL. The stretch at 184–214 forms a coiled coil; that stretch reads DLALADAASLRRQIIKLNRRLLLLEEENKER. Residues 220-237 form a helical; Anchor for type IV membrane protein membrane-spanning segment; it reads TMYSIIIIFGLLNSWLWF. Residues 238-239 are Extracellular-facing; the sequence is RR.

The protein belongs to the Tango11 family.

It is found in the mitochondrion outer membrane. The protein localises to the peroxisome. Plays a role in mitochondrial and peroxisomal fission. Promotes the recruitment and association of the fission mediator dynamin-related protein 1 (DNM1L) to the mitochondrial surface. The chain is Mitochondrial fission factor homolog B (mff-b) from Xenopus laevis (African clawed frog).